We begin with the raw amino-acid sequence, 353 residues long: Methylthioribose-1-phosphate isomerase (353 aa).

Substrate contacts are provided by residues 51–53, Arg94, and Gln203; that span reads RGA. The Proton donor role is filled by Asp244. Residue 254–255 coordinates substrate; sequence NK.

The protein belongs to the eIF-2B alpha/beta/delta subunits family. MtnA subfamily.

The catalysed reaction is 5-(methylsulfanyl)-alpha-D-ribose 1-phosphate = 5-(methylsulfanyl)-D-ribulose 1-phosphate. Its pathway is amino-acid biosynthesis; L-methionine biosynthesis via salvage pathway; L-methionine from S-methyl-5-thio-alpha-D-ribose 1-phosphate: step 1/6. In terms of biological role, catalyzes the interconversion of methylthioribose-1-phosphate (MTR-1-P) into methylthioribulose-1-phosphate (MTRu-1-P). This is Methylthioribose-1-phosphate isomerase from Trichodesmium erythraeum (strain IMS101).